Reading from the N-terminus, the 856-residue chain is DNA mismatch repair protein MutS (856 aa).

607–614 (GPNMAGKS) serves as a coordination point for ATP.

The protein belongs to the DNA mismatch repair MutS family.

In terms of biological role, this protein is involved in the repair of mismatches in DNA. It is possible that it carries out the mismatch recognition step. This protein has a weak ATPase activity. In Cytophaga hutchinsonii (strain ATCC 33406 / DSM 1761 / CIP 103989 / NBRC 15051 / NCIMB 9469 / D465), this protein is DNA mismatch repair protein MutS.